We begin with the raw amino-acid sequence, 113 residues long: UPF0122 protein Sez_1013 (113 aa).

This sequence belongs to the UPF0122 family.

Its function is as follows. Might take part in the signal recognition particle (SRP) pathway. This is inferred from the conservation of its genetic proximity to ftsY/ffh. May be a regulatory protein. The sequence is that of UPF0122 protein Sez_1013 from Streptococcus equi subsp. zooepidemicus (strain MGCS10565).